A 257-amino-acid chain; its full sequence is MDKCWFTLDNAHYPPPSLDSMRSGHPISPASLGHLIPSLAHLDQIINAKAIEPFPATMDIHGPTIIEDFKWDHSHEYSLSLGGKVPIPLAPAGVPFVDLNVGLGGAFSRSVANYWEFDRLERYIMQPTRSYVQKCIERDEVKRWIAKNKSMMMMGRWEVYMITGIIVARGGGRKKKEKTTGKEFSVEVTVEVPLIVEAGPGGKRNTARQKTWGTSQTGDFVWAVRLAKITKSGLHSDWKMETVFGKTSSFRGQKAIF.

The protein belongs to the gasdermin family. In terms of assembly, heterooligomer; the heterooligomer with rcd-1-2 forms a ring-shaped pore complex when inserted in the membrane.

The protein localises to the cytoplasm. Its subcellular location is the cell membrane. Its function is as follows. Gasdermin-like protein involved in heterokaryon incompatibility, a process that ensures that during spontaneous vegetative cell fusion, only compatible cells from the same colony survive (non-self-recognition). In N.crassa, the rcd-1 locus exists as 2 incompatible alleles, rcd-1-1 (this entry) and rcd-1-2 (AC P0DW10). During the allorecognition process, forms a heterooligomer with rcd-1-2, thereby forming a functional gasdermin-like complex that binds to membranes and forms pores, triggering cell death. Binds negatively charged phospholipids, such as cardiolipin and phosphatidylserine. Also binds to phosphoinositides, preferentially to phosphatidylinositol-3-phosphate (PtdIns-3-P), PtdIns-5-P and PtdIns-3,5-P2. The chain is Gasdermin-like protein rcd-1-1 from Neurospora crassa (strain ATCC 24698 / 74-OR23-1A / CBS 708.71 / DSM 1257 / FGSC 987).